We begin with the raw amino-acid sequence, 223 residues long: Uridylate kinase (223 aa).

9–10 (GS) contacts ATP. Gly43 is a binding site for UMP. Positions 44 and 48 each coordinate ATP. Residues Asp65 and 112–118 (THPGHTT) contribute to the UMP site. ATP is bound by residues Thr137, Asn138, Tyr143, and Asp146.

Belongs to the UMP kinase family. In terms of assembly, homohexamer.

The protein localises to the cytoplasm. It catalyses the reaction UMP + ATP = UDP + ADP. It functions in the pathway pyrimidine metabolism; CTP biosynthesis via de novo pathway; UDP from UMP (UMPK route): step 1/1. Inhibited by UTP. In terms of biological role, catalyzes the reversible phosphorylation of UMP to UDP. The chain is Uridylate kinase from Methanopyrus kandleri (strain AV19 / DSM 6324 / JCM 9639 / NBRC 100938).